A 491-amino-acid polypeptide reads, in one-letter code: Probable glycine dehydrogenase (decarboxylating) subunit 2 (491 aa).

At K273 the chain carries N6-(pyridoxal phosphate)lysine.

Belongs to the GcvP family. C-terminal subunit subfamily. In terms of assembly, the glycine cleavage system is composed of four proteins: P, T, L and H. In this organism, the P 'protein' is a heterodimer of two subunits. It depends on pyridoxal 5'-phosphate as a cofactor.

It catalyses the reaction N(6)-[(R)-lipoyl]-L-lysyl-[glycine-cleavage complex H protein] + glycine + H(+) = N(6)-[(R)-S(8)-aminomethyldihydrolipoyl]-L-lysyl-[glycine-cleavage complex H protein] + CO2. In terms of biological role, the glycine cleavage system catalyzes the degradation of glycine. The P protein binds the alpha-amino group of glycine through its pyridoxal phosphate cofactor; CO(2) is released and the remaining methylamine moiety is then transferred to the lipoamide cofactor of the H protein. This Bacillus anthracis (strain A0248) protein is Probable glycine dehydrogenase (decarboxylating) subunit 2.